The sequence spans 173 residues: Xanthine-guanine phosphoribosyltransferase (173 aa).

5-phospho-alpha-D-ribose 1-diphosphate-binding positions include 48-49 (RG) and 107-115 (DDLVDTGKT). Aspartate 108 lines the Mg(2+) pocket. Guanine is bound by residues aspartate 111 and isoleucine 154. Xanthine-binding residues include aspartate 111 and isoleucine 154. Residues 111 to 115 (DTGKT) and 153 to 154 (WI) each bind GMP.

The protein belongs to the purine/pyrimidine phosphoribosyltransferase family. XGPT subfamily. Homotetramer. The cofactor is Mg(2+).

It localises to the cell inner membrane. It catalyses the reaction GMP + diphosphate = guanine + 5-phospho-alpha-D-ribose 1-diphosphate. The enzyme catalyses XMP + diphosphate = xanthine + 5-phospho-alpha-D-ribose 1-diphosphate. It carries out the reaction IMP + diphosphate = hypoxanthine + 5-phospho-alpha-D-ribose 1-diphosphate. Its pathway is purine metabolism; GMP biosynthesis via salvage pathway; GMP from guanine: step 1/1. It functions in the pathway purine metabolism; XMP biosynthesis via salvage pathway; XMP from xanthine: step 1/1. Purine salvage pathway enzyme that catalyzes the transfer of the ribosyl-5-phosphate group from 5-phospho-alpha-D-ribose 1-diphosphate (PRPP) to the N9 position of the 6-oxopurines guanine and xanthine to form the corresponding ribonucleotides GMP (guanosine 5'-monophosphate) and XMP (xanthosine 5'-monophosphate), with the release of PPi. To a lesser extent, also acts on hypoxanthine. The polypeptide is Xanthine-guanine phosphoribosyltransferase (Rhodopseudomonas palustris (strain ATCC BAA-98 / CGA009)).